Here is a 792-residue protein sequence, read N- to C-terminus: Ubiquitin carboxyl-terminal hydrolase 10 (792 aa).

N-acetylalanine is present on Ala-2. The interaction with p53/TP53 stretch occupies residues 2-99 (ALHNPQYIFG…ILGCTTSKKI (98 aa)). Residues 6–21 (PQYIFGDFSPDEFNQF) are G3BP1-binding. Thr-24 is subject to Phosphothreonine. Residues 126–164 (SNAEAETLENDSGAGGLGQRERKKKKKRPPGYYSYLKDG) form a disordered region. 2 positions are modified to phosphoserine: Ser-208 and Ser-223. The segment covering 300-309 (DEGADLDPAK) has biased composition (basic and acidic residues). Residues 300 to 323 (DEGADLDPAKPESQSPPAESALSA) form a disordered region. Ser-314 is modified (phosphoserine). Phosphoserine; by ATM is present on Ser-330. A disordered region spans residues 350–369 (PMAYVETKCSPPVPSPLASE). Phosphoserine is present on residues Ser-359 and Ser-364. Residues 409 to 789 (RGLINKGNWC…TAYLLYYRRV (381 aa)) enclose the USP domain. The active-site Nucleophile is the Cys-418. The residue at position 541 (Ser-541) is a Phosphoserine. The segment at 542–580 (PTHEKHSVSNGPRSDLIEDEELEDTGKGSEDEWEQVGPK) is disordered. Residue Thr-566 is modified to Phosphothreonine. Ser-570 carries the post-translational modification Phosphoserine. His-743 functions as the Proton acceptor in the catalytic mechanism.

The protein belongs to the peptidase C19 family. USP10 subfamily. In terms of assembly, found in a deubiquitination complex with TANK, USP10 and ZC3H12A; this complex inhibits genotoxic stress- or interleukin-1-beta (IL1B)-mediated NF-kappa-B activation by promoting IKBKG or TRAF6 deubiquitination. Interacts with IKBKG; this interaction increases in response to DNA damage. Interacts with TANK; this interaction increases in response to DNA damage. Interacts with TRAF6; this interaction increases in response to DNA damage. Interacts with ZC3H12A; this interaction increases in response to DNA damage. Interacts with G3BP1 (via NTF2 domain) and G3BP2 (via NTF2 domain); inhibiting stress granule formation. In terms of processing, phosphorylated by ATM following DNA damage, leading to stabilization and translocation it to the nucleus. Ubiquitinated. Deubiquitinated by USP13.

The protein localises to the cytoplasm. It localises to the nucleus. Its subcellular location is the early endosome. The enzyme catalyses Thiol-dependent hydrolysis of ester, thioester, amide, peptide and isopeptide bonds formed by the C-terminal Gly of ubiquitin (a 76-residue protein attached to proteins as an intracellular targeting signal).. With respect to regulation, specifically inhibited by spautin-1 (specific and potent autophagy inhibitor-1), a derivative of MBCQ that binds to USP10 and inhibits deubiquitinase activity. Regulated by PIK3C3/VPS34-containing complexes. Functionally, hydrolase that can remove conjugated ubiquitin from target proteins such as p53/TP53, RPS2/us5, RPS3/us3, RPS10/eS10, BECN1, SNX3 and CFTR. Acts as an essential regulator of p53/TP53 stability: in unstressed cells, specifically deubiquitinates p53/TP53 in the cytoplasm, leading to counteract MDM2 action and stabilize p53/TP53. Following DNA damage, translocates to the nucleus and deubiquitinates p53/TP53, leading to regulate the p53/TP53-dependent DNA damage response. Component of a regulatory loop that controls autophagy and p53/TP53 levels: mediates deubiquitination of BECN1, a key regulator of autophagy, leading to stabilize the PIK3C3/VPS34-containing complexes. In turn, PIK3C3/VPS34-containing complexes regulate USP10 stability, suggesting the existence of a regulatory system by which PIK3C3/VPS34-containing complexes regulate p53/TP53 protein levels via USP10 and USP13. Does not deubiquitinate MDM2. Plays a key role in 40S ribosome subunit recycling when a ribosome has stalled during translation: acts both by inhibiting formation of stress granules, which store stalled translation pre-initiation complexes, and mediating deubiquitination of 40S ribosome subunits. Acts as a negative regulator of stress granules formation by lowering G3BP1 and G3BP2 valence, thereby preventing G3BP1 and G3BP2 ability to undergo liquid-liquid phase separation (LLPS) and assembly of stress granules. Promotes 40S ribosome subunit recycling following ribosome dissociation in response to ribosome stalling by mediating deubiquitination of 40S ribosomal proteins RPS2/us5, RPS3/us3 and RPS10/eS10, thereby preventing their degradation by the proteasome. Part of a ribosome quality control that takes place when ribosomes have stalled during translation initiation (iRQC): USP10 acts by removing monoubiquitination of RPS2/us5 and RPS3/us3, promoting 40S ribosomal subunit recycling. Deubiquitinates CFTR in early endosomes, enhancing its endocytic recycling. Involved in a TANK-dependent negative feedback response to attenuate NF-kappa-B activation via deubiquitinating IKBKG or TRAF6 in response to interleukin-1-beta (IL1B) stimulation or upon DNA damage. Deubiquitinates TBX21 leading to its stabilization. Plays a negative role in the RLR signaling pathway upon RNA virus infection by blocking the RIGI-mediated MAVS activation. Mechanistically, removes the unanchored 'Lys-63'-linked polyubiquitin chains of MAVS to inhibit its aggregation, essential for its activation. This Mus musculus (Mouse) protein is Ubiquitin carboxyl-terminal hydrolase 10 (Usp10).